The chain runs to 415 residues: Runt-related transcription factor 3 (415 aa).

Disordered stretches follow at residues 1-48 (MRIP…GGRA), 176-266 (GPRE…FPDP), and 375-415 (NLMN…WRPY). The 129-residue stretch at 54–182 (SMVDVLADHA…TVDGPREPRR (129 aa)) folds into the Runt domain. Basic and acidic residues predominate over residues 186-205 (KLEDQTKPFPDRFGDLERLR). A Glycyl lysine isopeptide (Lys-Gly) (interchain with G-Cter in SUMO2) cross-link involves residue Lys192. The span at 209-240 (TPSTPSPRGSLSTTSHFSSQPQTPIQGTSELN) shows a compositional bias: polar residues. Residue Ser243 is modified to Phosphoserine. The segment covering 393 to 402 (SHSNSPTALS) has biased composition (polar residues). Positions 406–415 (RMDEAVWRPY) are enriched in basic and acidic residues.

As to quaternary structure, heterodimer with CBFB. RUNX3 binds DNA as a monomer and through the Runt domain. DNA-binding is increased by heterodimerization. Interacts with TLE1 and SUV39H1. The tyrosine phosphorylated form (via runt domain) interacts with SRC (via protein kinase domain). Interacts with FYN and LCK. Interacts with FOXP3. Interacts with ZFHX3. Interacts with TBX21. Post-translationally, phosphorylated on tyrosine residues by SRC. Phosphorylated by LCK and FYN. As to expression, expressed in gastric cancer tissues (at protein level).

It is found in the nucleus. It localises to the cytoplasm. Functionally, forms the heterodimeric complex core-binding factor (CBF) with CBFB. RUNX members modulate the transcription of their target genes through recognizing the core consensus binding sequence 5'-TGTGGT-3', or very rarely, 5'-TGCGGT-3', within their regulatory regions via their runt domain, while CBFB is a non-DNA-binding regulatory subunit that allosterically enhances the sequence-specific DNA-binding capacity of RUNX. The heterodimers bind to the core site of a number of enhancers and promoters, including murine leukemia virus, polyomavirus enhancer, T-cell receptor enhancers, LCK, IL3 and GM-CSF promoters. May be involved in the control of cellular proliferation and/or differentiation. In association with ZFHX3, up-regulates CDKN1A promoter activity following TGF-beta stimulation. CBF complexes repress ZBTB7B transcription factor during cytotoxic (CD8+) T cell development. They bind to RUNX-binding sequence within the ZBTB7B locus acting as transcriptional silencer and allowing for cytotoxic T cell differentiation. CBF complexes binding to the transcriptional silencer is essential for recruitment of nuclear protein complexes that catalyze epigenetic modifications to establish epigenetic ZBTB7B silencing. Necessary for the development and survival of sensory neurons expressing parvalbumin. The protein is Runt-related transcription factor 3 (RUNX3) of Homo sapiens (Human).